We begin with the raw amino-acid sequence, 464 residues long: DNA primase DnaG (464 aa).

The 75-residue stretch at 171–245 (DTIIIVEGRA…DIDYVARAPK (75 aa)) folds into the Toprim domain. 3 residues coordinate Mg(2+): glutamate 177, aspartate 219, and aspartate 221.

Belongs to the archaeal DnaG primase family. In terms of assembly, forms a ternary complex with MCM helicase and DNA. Mg(2+) is required as a cofactor.

The catalysed reaction is ssDNA + n NTP = ssDNA/pppN(pN)n-1 hybrid + (n-1) diphosphate.. Functionally, RNA polymerase that catalyzes the synthesis of short RNA molecules used as primers for DNA polymerase during DNA replication. The chain is DNA primase DnaG from Methanococcus aeolicus (strain ATCC BAA-1280 / DSM 17508 / OCM 812 / Nankai-3).